Consider the following 1366-residue polypeptide: DNA-directed RNA polymerase subunit beta'' (1366 aa).

The Zn(2+) site is built by C220, C290, C297, and C300.

The protein belongs to the RNA polymerase beta' chain family. RpoC2 subfamily. In plastids the minimal PEP RNA polymerase catalytic core is composed of four subunits: alpha, beta, beta', and beta''. When a (nuclear-encoded) sigma factor is associated with the core the holoenzyme is formed, which can initiate transcription. It depends on Zn(2+) as a cofactor.

It is found in the plastid. Its subcellular location is the chloroplast. It carries out the reaction RNA(n) + a ribonucleoside 5'-triphosphate = RNA(n+1) + diphosphate. DNA-dependent RNA polymerase catalyzes the transcription of DNA into RNA using the four ribonucleoside triphosphates as substrates. The polypeptide is DNA-directed RNA polymerase subunit beta'' (Lemna minor (Common duckweed)).